The sequence spans 101 residues: Large ribosomal subunit protein bL27 (101 aa).

The propeptide occupies Met1 to Phe9.

The protein belongs to the bacterial ribosomal protein bL27 family. In terms of processing, the N-terminus is cleaved by ribosomal processing cysteine protease Prp.

The protein is Large ribosomal subunit protein bL27 of Clostridium tetani (strain Massachusetts / E88).